Here is a 113-residue protein sequence, read N- to C-terminus: Parvalbumin beta (113 aa).

An N-acetylalanine modification is found at alanine 1. S-linked (Glc) cysteine glycosylation occurs at cysteine 18. 2 consecutive EF-hand domains span residues 38–73 (FSAD…FAAD) and 77–112 (LTDA…WGAK). Aspartate 51, aspartate 53, glutamate 55, phenylalanine 57, glutamate 59, glutamate 62, aspartate 90, aspartate 92, aspartate 94, lysine 96, and glutamate 101 together coordinate Ca(2+).

This sequence belongs to the parvalbumin family. In terms of tissue distribution, muscle (at protein level).

In terms of biological role, in muscle, parvalbumin is thought to be involved in relaxation after contraction. It binds two calcium ions. This chain is Parvalbumin beta, found in Gadus morhua subsp. callarias (Baltic cod).